The following is a 1185-amino-acid chain: Chromosome partition protein Smc (1185 aa).

32–39 (PNGSGKSN) contacts ATP. A coiled-coil region spans residues 167–494 (ISKYKSRKMD…KLNEKNSHLS (328 aa)). One can recognise an SMC hinge domain in the interval 521–639 (TGIIGVVADQ…TDLKSAIEIA (119 aa)). The stretch at 677–1031 (RSRKIEDLKK…KVIQEIEETM (355 aa)) forms a coiled coil.

This sequence belongs to the SMC family. Homodimer.

It is found in the cytoplasm. Required for chromosome condensation and partitioning. In Halothermothrix orenii (strain H 168 / OCM 544 / DSM 9562), this protein is Chromosome partition protein Smc.